A 403-amino-acid chain; its full sequence is Phosphopentomutase 2 (403 aa).

Mn(2+)-binding residues include Asp-13, Asp-298, His-303, Asp-339, His-340, and His-351.

It belongs to the phosphopentomutase family. The cofactor is Mn(2+).

It localises to the cytoplasm. It carries out the reaction 2-deoxy-alpha-D-ribose 1-phosphate = 2-deoxy-D-ribose 5-phosphate. The enzyme catalyses alpha-D-ribose 1-phosphate = D-ribose 5-phosphate. It functions in the pathway carbohydrate degradation; 2-deoxy-D-ribose 1-phosphate degradation; D-glyceraldehyde 3-phosphate and acetaldehyde from 2-deoxy-alpha-D-ribose 1-phosphate: step 1/2. Functionally, isomerase that catalyzes the conversion of deoxy-ribose 1-phosphate (dRib-1-P) and ribose 1-phosphate (Rib-1-P) to deoxy-ribose 5-phosphate (dRib-5-P) and ribose 5-phosphate (Rib-5-P), respectively. This is Phosphopentomutase 2 from Streptococcus agalactiae serotype Ia (strain ATCC 27591 / A909 / CDC SS700).